A 128-amino-acid polypeptide reads, in one-letter code: MFYSIVAIFVGAGLGALLRWFLSLALNAFFPAVPLGTLASNLIGGYVIGVAAVVFTVRVGLPPEWRLFVITGFLGGLTTFSTYSVEVMTHALEGEFGWALAVAALHLTGSFALTALGMWTARAWLAVA.

Helical transmembrane passes span 5-25 (IVAIFVGAGLGALLRWFLSLA), 35-55 (LGTLASNLIGGYVIGVAAVVF), 67-87 (LFVITGFLGGLTTFSTYSVEV), and 96-116 (FGWALAVAALHLTGSFALTAL). Gly75 and Thr78 together coordinate Na(+).

This sequence belongs to the fluoride channel Fluc/FEX (TC 1.A.43) family.

It localises to the cell inner membrane. It catalyses the reaction fluoride(in) = fluoride(out). Na(+) is not transported, but it plays an essential structural role and its presence is essential for fluoride channel function. Its function is as follows. Fluoride-specific ion channel. Important for reducing fluoride concentration in the cell, thus reducing its toxicity. In Burkholderia orbicola (strain MC0-3), this protein is Fluoride-specific ion channel FluC.